The following is a 419-amino-acid chain: Pregnancy-specific beta-1-glycoprotein 1 (419 aa).

The N-terminal stretch at 1–34 (MGTLSAPPCTQRIKWKGLLLTASLLNFWNLPTTA) is a signal peptide. Residues 35-144 (QVTIEAEPTK…TGRFTFTLHL (110 aa)) enclose the Ig-like V-type domain. Asn-61, Asn-104, Asn-111, Asn-199, Asn-259, Asn-268, and Asn-303 each carry an N-linked (GlcNAc...) asparagine glycan. Ig-like C2-type domains follow at residues 149–234 (PSIS…VTLN), 240–327 (PKPY…VTLN), and 335–410 (PRIY…KSMT). Cys-169 and Cys-217 form a disulfide bridge. Disulfide bonds link Cys-262-Cys-310 and Cys-354-Cys-394.

Belongs to the immunoglobulin superfamily. CEA family.

Its subcellular location is the secreted. This Homo sapiens (Human) protein is Pregnancy-specific beta-1-glycoprotein 1 (PSG1).